Here is a 142-residue protein sequence, read N- to C-terminus: Large ribosomal subunit protein uL11 (142 aa).

It belongs to the universal ribosomal protein uL11 family. Part of the ribosomal stalk of the 50S ribosomal subunit. Interacts with L10 and the large rRNA to form the base of the stalk. L10 forms an elongated spine to which L12 dimers bind in a sequential fashion forming a multimeric L10(L12)X complex. In terms of processing, one or more lysine residues are methylated.

Functionally, forms part of the ribosomal stalk which helps the ribosome interact with GTP-bound translation factors. The chain is Large ribosomal subunit protein uL11 from Shigella boydii serotype 18 (strain CDC 3083-94 / BS512).